The following is a 452-amino-acid chain: Serine--tRNA ligase (452 aa).

Residue 251–253 (TSE) participates in L-serine binding. 282–284 (RSE) contacts ATP. E305 is a binding site for L-serine. 369 to 372 (EISS) contributes to the ATP binding site. S404 provides a ligand contact to L-serine.

This sequence belongs to the class-II aminoacyl-tRNA synthetase family. Type-1 seryl-tRNA synthetase subfamily. As to quaternary structure, homodimer. The tRNA molecule binds across the dimer.

The protein resides in the cytoplasm. It catalyses the reaction tRNA(Ser) + L-serine + ATP = L-seryl-tRNA(Ser) + AMP + diphosphate + H(+). The enzyme catalyses tRNA(Sec) + L-serine + ATP = L-seryl-tRNA(Sec) + AMP + diphosphate + H(+). The protein operates within aminoacyl-tRNA biosynthesis; selenocysteinyl-tRNA(Sec) biosynthesis; L-seryl-tRNA(Sec) from L-serine and tRNA(Sec): step 1/1. Catalyzes the attachment of serine to tRNA(Ser). Is also able to aminoacylate tRNA(Sec) with serine, to form the misacylated tRNA L-seryl-tRNA(Sec), which will be further converted into selenocysteinyl-tRNA(Sec). The protein is Serine--tRNA ligase of Albidiferax ferrireducens (strain ATCC BAA-621 / DSM 15236 / T118) (Rhodoferax ferrireducens).